Reading from the N-terminus, the 5099-residue chain is Malformin synthetase mlfA (5099 aa).

Residues 224-615 (QRHAADRPHS…CGRADTQVKL (392 aa)) form an adenylation 1 region. The Carrier 1 domain occupies 756–829 (THLENEIQLA…EAASLAKVRD (74 aa)). S790 carries the O-(pantetheine 4'-phosphoryl)serine modification. Positions 867-1297 (EDVFPCTSMQ…PVDSLTLLKP (431 aa)) are condensation 1. Positions 1325 to 1717 (DRWVNRQPDT…GRKDTQVKLR (393 aa)) are adenylation 2. The Carrier 2 domain occupies 1857-1934 (ARAPELERTL…QIATQCEGIA (78 aa)). S1894 bears the O-(pantetheine 4'-phosphoryl)serine mark. Residues 1995–2040 (MQQESSSSPAPSVSSSSSSSSAPKPLLAQPEPPTNLRDSVPEPFSL) are disordered. The segment covering 1999–2017 (SSSSPAPSVSSSSSSSSAP) has biased composition (low complexity). Residues 2067-2482 (EDIYPATPLQ…ALSPGDKKVL (416 aa)) are condensation 2. Residues 2505–2897 (LSTPHAPAVC…VGRKDGQLKL (393 aa)) are adenylation 3. The region spanning 3032–3108 (RPATAQERGL…RLVLHLQNTS (77 aa)) is the Carrier 3 domain. O-(pantetheine 4'-phosphoryl)serine is present on S3069. Condensation regions lie at residues 3125–3589 (WVHL…TYDQ) and 3610–4033 (DIYP…QQAM). The interval 4058 to 4446 (YANREAVCAW…VGRKDSQIKF (389 aa)) is adenylation 4. One can recognise a Carrier 4 domain in the interval 4581 to 4657 (PPSTGMQQGI…DLAEHISSRV (77 aa)). S4618 carries the post-translational modification O-(pantetheine 4'-phosphoryl)serine. The segment at 4696-5017 (DILPTTGFQR…LQTVVQHQNV (322 aa)) is condensation 5.

Belongs to the NRP synthetase family.

The protein operates within secondary metabolite biosynthesis. In terms of biological role, nonribosomal peptide synthetase; part of the gene cluster that mediates the biosynthesis of malformins, cyclic pentapeptides with a disulfide bond between 2 consecutive cysteins, that show potential anti-tumor as well as antimalarial and antitrypanosomal properties. The nonribosomal peptide synthetase mlfA is responsible of the formation of the cyclic pentapeptide. The malformin biosynthesis clusters in malformin-producing fungi also contain enzymes involved in the formation of the disulfide bond between the two consecutive cysteins within malformins, in addition to additional tailoring enzymes such as methyltransferases or oxidoreductases. They are also composed of up to 4 major facilitator superfamily transporters, and transcription factors probably involved in the regulation of the expression of those clusters. The sequence is that of Malformin synthetase mlfA from Aspergillus sclerotiicarbonarius (strain CBS 121057 / IBT 28362).